The chain runs to 591 residues: L-lactate dehydrogenase (cytochrome) (591 aa).

Residues 1–80 (MLKYKPLLKI…LNWHNGQIDN (80 aa)) constitute a mitochondrion transit peptide. The 78-residue stretch at 88–165 (KQKISPAEVA…APEKKLGPLQ (78 aa)) folds into the Cytochrome b5 heme-binding domain. Heme b contacts are provided by H123, H146, Y177, Q219, and Y223. Positions 197–563 (PPLDNIINLY…KPDLLDLSTL (367 aa)) constitute an FMN hydroxy acid dehydrogenase domain. A pyruvate-binding site is contributed by Y223. Residues 275–278 (SATA), S308, and Q332 each bind FMN. Y334 is a binding site for pyruvate. T360 is a binding site for FMN. K376 is a heme b binding site. K429 contacts FMN. 2 residues coordinate pyruvate: H453 and R456. H453 functions as the Proton acceptor in the catalytic mechanism. FMN is bound by residues 489–493 (DGGVR) and 512–513 (GR).

In the N-terminal section; belongs to the cytochrome b5 family. It in the C-terminal section; belongs to the FMN-dependent alpha-hydroxy acid dehydrogenase family. As to quaternary structure, homotetramer. FMN serves as cofactor. Heme b is required as a cofactor.

It localises to the mitochondrion intermembrane space. It carries out the reaction (S)-lactate + 2 Fe(III)-[cytochrome c] = 2 Fe(II)-[cytochrome c] + pyruvate + 2 H(+). In terms of biological role, catalyzes the oxidation of (S)-lactate (L-lactate) to pyruvate with subsequent transfer of electrons to cytochrome c. Is involved in the utilization of (S)-lactate as a sole source of carbon for growth. Can also use ferricyanide as an electron acceptor in vitro. The chain is L-lactate dehydrogenase (cytochrome) (CYB2) from Saccharomyces cerevisiae (strain ATCC 204508 / S288c) (Baker's yeast).